The chain runs to 522 residues: MKHRTFFSLCAKFGCLLALGACSPKIVDAGAATVPHTLSTLKTADNRPASVYLKKDKPTLIKFWASWCPLCLSELGQTEKWAQDAKFSSANLITVASPGFLHEKKDGDFQKWYAGLNYPKLPVVTDNGGTIAQSLNISVYPSWALIGKDSDVQRIVKGSINEAQALALIRDPNADLGSLKHSFYKPDTQKKDSKIMNTRTIYLAGGCFWGLEAYFQRIDGVVDAVSGYANGNTKNPSYEDVSYRHTGHAETVKVTYDADKLSLDDILQYFFRVVDPTSLNKQGNDTGTQYRSGVYYTDPAEKAVIAAALKREQQKYQLPLVVENEPLKNFYDAEEYHQDYLIKNPNGYCHIDIRKADEPLPGKTKTAPQGKGFDAATYKKPSDAELKRTLTEEQYQVTQNSATEYAFSHEYDHLFKPGIYVDVVSGEPLFSSADKYDSGCGWPSFTRPIDAKSVTEHDDFSYNMRRTEVRSHAADSHLGHVFPDGPRDKGGLRYCINGASLKFIPLEQMDAAGYGALKGKVK.

Residues 17 to 174 (LALGACSPKI…ALALIRDPNA (158 aa)) enclose the Thioredoxin domain. Cysteine 68 and cysteine 71 are joined by a disulfide. A peptide methionine sulfoxide reductase A region spans residues 199-354 (RTIYLAGGCF…PNGYCHIDIR (156 aa)). Cysteine 207 is an active-site residue. Residues 383 to 506 (DAELKRTLTE…NGASLKFIPL (124 aa)) enclose the MsrB domain. The cysteines at positions 440 and 495 are disulfide-linked. Cysteine 495 serves as the catalytic Nucleophile.

This sequence in the N-terminal section; belongs to the thioredoxin family. It in the central section; belongs to the MsrA Met sulfoxide reductase family. The protein in the C-terminal section; belongs to the MsrB Met sulfoxide reductase family.

It catalyses the reaction L-methionyl-[protein] + [thioredoxin]-disulfide + H2O = L-methionyl-(S)-S-oxide-[protein] + [thioredoxin]-dithiol. The catalysed reaction is [thioredoxin]-disulfide + L-methionine + H2O = L-methionine (S)-S-oxide + [thioredoxin]-dithiol. The enzyme catalyses L-methionyl-[protein] + [thioredoxin]-disulfide + H2O = L-methionyl-(R)-S-oxide-[protein] + [thioredoxin]-dithiol. Has an important function as a repair enzyme for proteins that have been inactivated by oxidation. Catalyzes the reversible oxidation-reduction of methionine sulfoxide in proteins to methionine. This is Peptide methionine sulfoxide reductase MsrA/MsrB (msrAB) from Neisseria meningitidis serogroup B (strain ATCC BAA-335 / MC58).